Consider the following 175-residue polypeptide: Interleukin-10 (175 aa).

A signal peptide spans 1–21 (MQTCCQALLLLLAACTLPAHC). 2 cysteine pairs are disulfide-bonded: C26–C123 and C77–C129.

This sequence belongs to the IL-10 family. In terms of assembly, homodimer. Interacts with IL10RA and IL10RB. Expressed predominantly in bursa of Fabricius and cecal tonsils with low levels in thymus, liver and lung.

Its subcellular location is the secreted. Major immune regulatory cytokine that acts on many cells of the immune system where it has profound anti-inflammatory functions, limiting excessive tissue disruption caused by inflammation. Mechanistically, IL10 binds to its heterotetrameric receptor comprising IL10RA and IL10RB leading to JAK1 and STAT2-mediated phosphorylation of STAT3. In turn, STAT3 translocates to the nucleus where it drives expression of anti-inflammatory mediators. Targets antigen-presenting cells (APCs) such as macrophages and monocytes and inhibits their release of pro-inflammatory cytokines including granulocyte-macrophage colony-stimulating factor /GM-CSF, granulocyte colony-stimulating factor/G-CSF, IL-1 alpha, IL-1 beta, IL-6, IL-8 and TNF-alpha. Also interferes with antigen presentation by reducing the expression of MHC-class II and co-stimulatory molecules, thereby inhibiting their ability to induce T cell activation. In addition, controls the inflammatory response of macrophages by reprogramming essential metabolic pathways including mTOR signaling. The chain is Interleukin-10 from Gallus gallus (Chicken).